A 249-amino-acid polypeptide reads, in one-letter code: tRNA (guanine-N(1)-)-methyltransferase (249 aa).

S-adenosyl-L-methionine is bound by residues Gly121 and 141-146 (LGDFVL).

The protein belongs to the RNA methyltransferase TrmD family. As to quaternary structure, homodimer.

Its subcellular location is the cytoplasm. It catalyses the reaction guanosine(37) in tRNA + S-adenosyl-L-methionine = N(1)-methylguanosine(37) in tRNA + S-adenosyl-L-homocysteine + H(+). Functionally, specifically methylates guanosine-37 in various tRNAs. This is tRNA (guanine-N(1)-)-methyltransferase from Cereibacter sphaeroides (strain ATCC 17023 / DSM 158 / JCM 6121 / CCUG 31486 / LMG 2827 / NBRC 12203 / NCIMB 8253 / ATH 2.4.1.) (Rhodobacter sphaeroides).